Reading from the N-terminus, the 193-residue chain is Phosphoheptose isomerase (193 aa).

An SIS domain is found at 37–193 (LADSFKAGGK…QLIEKEMVKA (157 aa)). Substrate is bound at residue 52-54 (NGG). Zn(2+) is bound by residues H61 and E65. Residues E65, 93-94 (ND), 119-121 (STS), S124, and Q172 each bind substrate. The Zn(2+) site is built by Q172 and H180.

Belongs to the SIS family. GmhA subfamily. In terms of assembly, homotetramer. Requires Zn(2+) as cofactor.

The protein localises to the cytoplasm. The catalysed reaction is 2 D-sedoheptulose 7-phosphate = D-glycero-alpha-D-manno-heptose 7-phosphate + D-glycero-beta-D-manno-heptose 7-phosphate. It participates in carbohydrate biosynthesis; D-glycero-D-manno-heptose 7-phosphate biosynthesis; D-glycero-alpha-D-manno-heptose 7-phosphate and D-glycero-beta-D-manno-heptose 7-phosphate from sedoheptulose 7-phosphate: step 1/1. In terms of biological role, catalyzes the isomerization of sedoheptulose 7-phosphate in D-glycero-D-manno-heptose 7-phosphate. The sequence is that of Phosphoheptose isomerase from Yersinia pseudotuberculosis serotype O:1b (strain IP 31758).